The sequence spans 250 residues: Small ribosomal subunit protein uS2 (250 aa).

The protein belongs to the universal ribosomal protein uS2 family.

This Delftia acidovorans (strain DSM 14801 / SPH-1) protein is Small ribosomal subunit protein uS2.